The chain runs to 166 residues: Large ribosomal subunit protein uL10 (166 aa).

It belongs to the universal ribosomal protein uL10 family. As to quaternary structure, part of the ribosomal stalk of the 50S ribosomal subunit. The N-terminus interacts with L11 and the large rRNA to form the base of the stalk. The C-terminus forms an elongated spine to which L12 dimers bind in a sequential fashion forming a multimeric L10(L12)X complex.

Forms part of the ribosomal stalk, playing a central role in the interaction of the ribosome with GTP-bound translation factors. This is Large ribosomal subunit protein uL10 from Lysinibacillus sphaericus (strain C3-41).